We begin with the raw amino-acid sequence, 534 residues long: UDP-glucuronosyltransferase 1A5 (534 aa).

Positions 1 to 28 (MATGLQVPLPQLATGLLLLLSVQPWAES) are cleaved as a signal peptide. N-linked (GlcNAc...) asparagine glycans are attached at residues N119, N296, and N348. A helical membrane pass occupies residues 492 to 508 (VIGFLLAVVLTVAFITF).

Belongs to the UDP-glycosyltransferase family. In terms of assembly, homodimer. Homooligomer. Interacts with UGT1A1, UGT1A3, UGT1A4, UGT1A6, UGT1A7, UGT1A8, UGT1A9 and UGT1A10 to form heterodimers. Isoform 1 interacts with isoform 2/i2 suggesting that oligomerization is involved in negative regulation of transferase activity by isoform 2. Isoform 1 also interacts with respective i2 isoforms of UGT1A1, UGT1A3, UGT1A4, UGT1A6, UGT1A7, UGT1A8, UGT1A9 and UGT1A10. Isoform 1 and isoform 2 are expressed in colon and small intestine. Neither isoform is expressed in liver, kidney or esophagus.

It is found in the endoplasmic reticulum membrane. The catalysed reaction is glucuronate acceptor + UDP-alpha-D-glucuronate = acceptor beta-D-glucuronoside + UDP + H(+). The enzyme catalyses zolasartan + UDP-alpha-D-glucuronate = zolarsartan-1-N-beta-D-glucuronide + UDP. Its function is as follows. UDP-glucuronosyltransferase (UGT) that catalyzes phase II biotransformation reactions in which lipophilic substrates are conjugated with glucuronic acid to increase the metabolite's water solubility, thereby facilitating excretion into either the urine or bile. Essential for the elimination and detoxification of drugs, xenobiotics and endogenous compounds. Involved in the glucuronidation of the AGTR1 angiotensin receptor antagonist zolarsatan, a drug which can inhibit the effect of angiotensin II. In terms of biological role, lacks UGT glucuronidation activity but acts as a negative regulator of isoform 1. This Homo sapiens (Human) protein is UDP-glucuronosyltransferase 1A5.